A 179-amino-acid polypeptide reads, in one-letter code: Large ribosomal subunit protein bL17 (179 aa).

The interval 127–179 (TDTLPDTVIDTGPDSAPDPVPGSEPGSAAGDLPDADTAPADPGESSSNQRVIR) is disordered. Positions 154-168 (AAGDLPDADTAPADP) are enriched in low complexity. A compositionally biased stretch (polar residues) spans 170–179 (ESSSNQRVIR).

The protein belongs to the bacterial ribosomal protein bL17 family. In terms of assembly, part of the 50S ribosomal subunit. Contacts protein L32.

This Tropheryma whipplei (strain TW08/27) (Whipple's bacillus) protein is Large ribosomal subunit protein bL17.